The chain runs to 556 residues: Urease subunit alpha 1 (556 aa).

Positions 127–556 constitute a Urease domain; it reads GAVDTHVHLL…SVSLNRLYFL (430 aa). 3 residues coordinate Ni(2+): His132, His134, and Lys212. The residue at position 212 (Lys212) is an N6-carboxylysine. Position 214 (His214) interacts with substrate. Ni(2+)-binding residues include His241 and His267. Catalysis depends on His315, which acts as the Proton donor. Asp355 contributes to the Ni(2+) binding site.

This sequence belongs to the metallo-dependent hydrolases superfamily. Urease alpha subunit family. As to quaternary structure, may form a heterohexamer of 3 UreC (alpha) and 3 UreAB (gamma/beta) subunits. May also form a heterotrimer of UreA (gamma), UreB (beta) and UreC (alpha) subunits. Three heterotrimers associate to form the active enzyme. Ni cation serves as cofactor. Carboxylation allows a single lysine to coordinate two nickel ions.

Its subcellular location is the cytoplasm. The enzyme catalyses urea + 2 H2O + H(+) = hydrogencarbonate + 2 NH4(+). It participates in nitrogen metabolism; urea degradation; CO(2) and NH(3) from urea (urease route): step 1/1. This chain is Urease subunit alpha 1, found in Streptomyces avermitilis (strain ATCC 31267 / DSM 46492 / JCM 5070 / NBRC 14893 / NCIMB 12804 / NRRL 8165 / MA-4680).